The following is a 259-amino-acid chain: Type III pantothenate kinase (259 aa).

6-13 lines the ATP pocket; the sequence is DVGNTNIV. Substrate-binding positions include Tyr100 and 107-110; that span reads GADR. Catalysis depends on Asp109, which acts as the Proton acceptor. Asp129 contacts K(+). ATP is bound at residue Thr132. Substrate is bound at residue Thr184.

It belongs to the type III pantothenate kinase family. In terms of assembly, homodimer. NH4(+) is required as a cofactor. It depends on K(+) as a cofactor.

The protein resides in the cytoplasm. The enzyme catalyses (R)-pantothenate + ATP = (R)-4'-phosphopantothenate + ADP + H(+). It participates in cofactor biosynthesis; coenzyme A biosynthesis; CoA from (R)-pantothenate: step 1/5. Its function is as follows. Catalyzes the phosphorylation of pantothenate (Pan), the first step in CoA biosynthesis. This is Type III pantothenate kinase from Clostridium perfringens (strain ATCC 13124 / DSM 756 / JCM 1290 / NCIMB 6125 / NCTC 8237 / Type A).